A 145-amino-acid polypeptide reads, in one-letter code: Putative pre-16S rRNA nuclease (145 aa).

This sequence belongs to the YqgF nuclease family.

The protein resides in the cytoplasm. Functionally, could be a nuclease involved in processing of the 5'-end of pre-16S rRNA. The chain is Putative pre-16S rRNA nuclease from Pseudomonas fluorescens.